We begin with the raw amino-acid sequence, 1547 residues long: ABC multidrug transporter atrF (1547 aa).

2 disordered regions span residues 1–66 (MADG…RRGA) and 85–123 (TRSV…IDGD). The segment covering 10–19 (SATSTTMETN) has biased composition (polar residues). Low complexity predominate over residues 36-47 (SSSMTATSSELS). The span at 51-66 (RWGERDQGEPVSRRGA) shows a compositional bias: basic and acidic residues. A compositionally biased stretch (acidic residues) spans 111 to 123 (KAIDEEDSTIDGD). In terms of domain architecture, ABC transporter 1 spans 197-439 (IPQLRFGKQP…FVNLGFHCPE (243 aa)). N-linked (GlcNAc...) asparagine glycosylation is found at Asn299 and Asn363. 7 helical membrane passes run 552–572 (LYTK…LFYG), 586–606 (ALFF…MPAV), 635–655 (FPAI…MTGL), 657–677 (VTAS…FSIT), 698–718 (GIAL…QGLI), 722–742 (IWFG…AVLT), and 804–824 (FGVV…AAEF). Residues 892–1130 (FTWSNVEYTV…DVIKYFADRG (239 aa)) form the ABC transporter 2 domain. N-linked (GlcNAc...) asparagine glycosylation occurs at Asn905. An ATP-binding site is contributed by 928–935 (GASGAGKT). Residues Asn980 and Asn999 are each glycosylated (N-linked (GlcNAc...) asparagine). 8 helical membrane passes run 1230-1250 (FVSV…GNSI), 1260-1280 (IFLI…KFYI), 1309-1329 (IPMA…PVGF), 1334-1354 (STAG…SSWG), 1356-1376 (WICA…FFFV), 1397-1417 (YWMY…SSIF), 1491-1511 (CFGI…FFIY), and 1520-1540 (FGMG…KGVF).

Belongs to the ABC transporter superfamily. ABCG family. PDR (TC 3.A.1.205) subfamily.

Its subcellular location is the cell membrane. It carries out the reaction voriconazole(in) + ATP + H2O = voriconazole(out) + ADP + phosphate + H(+). The catalysed reaction is fluconazole(in) + ATP + H2O = fluconazole(out) + ADP + phosphate + H(+). Its function is as follows. Pleiotropic ABC efflux transporter involved in the basal level of azole susceptibility. Confers resistance to fluconazole and voriconazole. This is ABC multidrug transporter atrF from Aspergillus fumigatus (strain ATCC MYA-4609 / CBS 101355 / FGSC A1100 / Af293) (Neosartorya fumigata).